The sequence spans 423 residues: Lysosomal acid phosphatase (423 aa).

Positions 1–30 (MAGRRFGWSRAALLQLILGVNLMVMPRTQA) are cleaved as a signal peptide. The Lumenal segment spans residues 31–380 (RTLRFVTLLY…QLAGGPADTE (350 aa)). His-42 acts as the Nucleophile in catalysis. Residues Asn-92, Asn-133, Asn-167, Asn-177, Asn-191, and Asn-267 are each glycosylated (N-linked (GlcNAc...) asparagine). Intrachain disulfides connect Cys-159–Cys-370, Cys-212–Cys-310, and Cys-345–Cys-349. Asp-287 acts as the Proton donor in catalysis. N-linked (GlcNAc...) asparagine glycosylation is found at Asn-322 and Asn-331. A helical transmembrane segment spans residues 381-401 (VIVALAVCGSILFLLIVLLLT). The Cytoplasmic segment spans residues 402-423 (VLFRVQAQPPGYRHVPDGEDHA).

It belongs to the histidine acid phosphatase family. The membrane-bound form is converted to the soluble form by sequential proteolytic processing. First, the C-terminal cytoplasmic tail is removed. Cleavage by a lysosomal protease releases the soluble form in the lysosome lumen.

It localises to the lysosome membrane. The protein localises to the lysosome lumen. The catalysed reaction is a phosphate monoester + H2O = an alcohol + phosphate. This Bos taurus (Bovine) protein is Lysosomal acid phosphatase (ACP2).